A 142-amino-acid chain; its full sequence is Large ribosomal subunit protein uL13 (142 aa).

Belongs to the universal ribosomal protein uL13 family. As to quaternary structure, part of the 50S ribosomal subunit.

In terms of biological role, this protein is one of the early assembly proteins of the 50S ribosomal subunit, although it is not seen to bind rRNA by itself. It is important during the early stages of 50S assembly. In Wigglesworthia glossinidia brevipalpis, this protein is Large ribosomal subunit protein uL13.